We begin with the raw amino-acid sequence, 392 residues long: Formate-dependent phosphoribosylglycinamide formyltransferase (392 aa).

N(1)-(5-phospho-beta-D-ribosyl)glycinamide-binding positions include 22–23 (EL) and glutamate 82. Residues arginine 114, lysine 155, 160 to 165 (SSGKGQ), 195 to 198 (EGVV), and glutamate 203 contribute to the ATP site. The ATP-grasp domain maps to 119 to 308 (RLAAEELQLP…EFALHVRAFL (190 aa)). Mg(2+)-binding residues include glutamate 267 and glutamate 279. Residues aspartate 286, lysine 355, and 362 to 363 (RR) contribute to the N(1)-(5-phospho-beta-D-ribosyl)glycinamide site.

It belongs to the PurK/PurT family. In terms of assembly, homodimer.

The catalysed reaction is N(1)-(5-phospho-beta-D-ribosyl)glycinamide + formate + ATP = N(2)-formyl-N(1)-(5-phospho-beta-D-ribosyl)glycinamide + ADP + phosphate + H(+). The protein operates within purine metabolism; IMP biosynthesis via de novo pathway; N(2)-formyl-N(1)-(5-phospho-D-ribosyl)glycinamide from N(1)-(5-phospho-D-ribosyl)glycinamide (formate route): step 1/1. Involved in the de novo purine biosynthesis. Catalyzes the transfer of formate to 5-phospho-ribosyl-glycinamide (GAR), producing 5-phospho-ribosyl-N-formylglycinamide (FGAR). Formate is provided by PurU via hydrolysis of 10-formyl-tetrahydrofolate. This is Formate-dependent phosphoribosylglycinamide formyltransferase from Shigella sonnei (strain Ss046).